The sequence spans 283 residues: NAD kinase (283 aa).

Asp61 serves as the catalytic Proton acceptor. Residues Asp61–Gly62, Asn134–Asp135, Arg145, Asp164, Thr175–Ser180, and Gln234 contribute to the NAD(+) site.

Belongs to the NAD kinase family. A divalent metal cation serves as cofactor.

The protein resides in the cytoplasm. The catalysed reaction is NAD(+) + ATP = ADP + NADP(+) + H(+). Functionally, involved in the regulation of the intracellular balance of NAD and NADP, and is a key enzyme in the biosynthesis of NADP. Catalyzes specifically the phosphorylation on 2'-hydroxyl of the adenosine moiety of NAD to yield NADP. The polypeptide is NAD kinase (Clostridium kluyveri (strain NBRC 12016)).